Here is a 267-residue protein sequence, read N- to C-terminus: Phosphate import ATP-binding protein PstB (267 aa).

Residues 21–262 (VAARNLDFYY…PSKQQTEDYI (242 aa)) enclose the ABC transporter domain. Residue 53–60 (GPSGCGKS) coordinates ATP.

Belongs to the ABC transporter superfamily. Phosphate importer (TC 3.A.1.7) family. As to quaternary structure, the complex is composed of two ATP-binding proteins (PstB), two transmembrane proteins (PstC and PstA) and a solute-binding protein (PstS).

The protein resides in the cell inner membrane. It carries out the reaction phosphate(out) + ATP + H2O = ADP + 2 phosphate(in) + H(+). Functionally, part of the ABC transporter complex PstSACB involved in phosphate import. Responsible for energy coupling to the transport system. The sequence is that of Phosphate import ATP-binding protein PstB from Xanthomonas campestris pv. campestris (strain 8004).